The following is a 51-amino-acid chain: Small ribosomal subunit protein eS31 (51 aa).

Zn(2+) is bound by residues cysteine 21, cysteine 24, cysteine 39, and cysteine 42. Residues 21–42 (CPRCGPGVFLAEHEDRFSCGRC) form a C4-type zinc finger.

Belongs to the eukaryotic ribosomal protein eS31 family. In terms of assembly, part of the 30S ribosomal subunit. Requires Zn(2+) as cofactor.

The sequence is that of Small ribosomal subunit protein eS31 from Picrophilus torridus (strain ATCC 700027 / DSM 9790 / JCM 10055 / NBRC 100828 / KAW 2/3).